A 353-amino-acid polypeptide reads, in one-letter code: Guanine nucleotide-binding protein subunit alpha (353 aa).

Residues 1 to 26 (MGCGMSTEEKEGKARNEEIENQLKRD) are disordered. Glycine 2 is lipidated: N-myristoyl glycine. Cysteine 3 is lipidated: S-palmitoyl cysteine. Residues 7-26 (TEEKEGKARNEEIENQLKRD) show a composition bias toward basic and acidic residues. The G-alpha domain maps to 32-353 (NEIKMLLLGA…QENLRLCGLI (322 aa)). A G1 motif region spans residues 35-48 (KMLLLGAGESGKST). GTP is bound by residues glutamate 43, serine 44, glycine 45, lysine 46, serine 47, threonine 48, aspartate 150, leucine 175, threonine 181, glycine 203, asparagine 269, lysine 270, aspartate 272, and alanine 325. Serine 47 serves as a coordination point for Mg(2+). Residues 173 to 181 (DVLRSRVKT) form a G2 motif region. Threonine 181 is a binding site for Mg(2+). Residues 196 to 205 (YRMFDVGGQR) are G3 motif. Residues 265–272 (ILFLNKID) are G4 motif. Residues 323-328 (TCATDT) form a G5 motif region.

This sequence belongs to the G-alpha family. G(q) subfamily. As to quaternary structure, g proteins are composed of 3 units; alpha, beta and gamma. The alpha chain contains the guanine nucleotide binding site. It depends on Mg(2+) as a cofactor.

Functionally, guanine nucleotide-binding proteins (G proteins) are involved as modulators or transducers in various transmembrane signaling systems. This chain is Guanine nucleotide-binding protein subunit alpha, found in Cryphonectria parasitica (Chestnut blight fungus).